Consider the following 431-residue polypeptide: Galactose-3-O-sulfotransferase 3 (431 aa).

Residues 1-19 (MPPILQRLQQATKMMSRRK) lie on the Cytoplasmic side of the membrane. Residues 20–40 (ILLLVLGCSTVSLLIHQGAQL) traverse the membrane as a helical; Signal-anchor for type II membrane protein segment. At 41-431 (SWYPKLFPLS…RVLPRGPQGP (391 aa)) the chain is on the lumenal side. Residues asparagine 91, asparagine 110, asparagine 177, and asparagine 302 are each glycosylated (N-linked (GlcNAc...) asparagine). The interval 399-431 (QKRRGGARARPEPVLDNPPPRPIRVLPRGPQGP) is disordered.

Belongs to the galactose-3-O-sulfotransferase family. It depends on Mg(2+) as a cofactor. In terms of tissue distribution, highly expressed in thyroid, brain, kidney, heart and spinal cord.

The protein resides in the golgi apparatus. It localises to the golgi stack membrane. It functions in the pathway protein modification; carbohydrate sulfation. In terms of biological role, transfers a sulfate to position 3 of non-reducing beta-galactosyl residues in N-glycans and core2-branched O-glycans. Has high activity towards Gal-beta-1,4-GlcNAc, Gal-beta-1,4(Fuc-alpha-1,3)GlcNAc and lower activity towards Gal-beta-1,3(Fuc-alpha-1,4)GlcNAc. This chain is Galactose-3-O-sulfotransferase 3 (GAL3ST3), found in Homo sapiens (Human).